A 402-amino-acid polypeptide reads, in one-letter code: CinA-like protein (402 aa).

This sequence belongs to the CinA family.

The protein is CinA-like protein of Fusobacterium nucleatum subsp. nucleatum (strain ATCC 25586 / DSM 15643 / BCRC 10681 / CIP 101130 / JCM 8532 / KCTC 2640 / LMG 13131 / VPI 4355).